Reading from the N-terminus, the 515-residue chain is Cytochrome P450 2D7 (515 aa).

Residues 1–2 lie on the Extracellular side of the membrane; that stretch reads MG. A helical membrane pass occupies residues 3–23; it reads LEALVPLAMIVAIFLLLVDLM. At 24-301 the chain is on the cytoplasmic side; the sequence is HRHQRWAARY…DENLRIVVGN (278 aa). The chain crosses the membrane as a helical span at residues 302 to 322; it reads LFLAGMVTTSTTLAWGLLLMI. At 323–515 the chain is on the extracellular side; sequence LHLDVQRGRR…SPYELCAVPR (193 aa). A glycan (N-linked (GlcNAc...) asparagine) is linked at Asn416. Position 461 (Cys461) interacts with heme.

Belongs to the cytochrome P450 family. It depends on heme as a cofactor. In terms of tissue distribution, expressed in brain cortex (at protein level).

Its subcellular location is the membrane. It localises to the cytoplasm. It is found in the mitochondrion. The catalysed reaction is an organic molecule + reduced [NADPH--hemoprotein reductase] + O2 = an alcohol + oxidized [NADPH--hemoprotein reductase] + H2O + H(+). May be responsible for the metabolism of many drugs and environmental chemicals that it oxidizes. It may be involved in the metabolism of codeine to morphine. However, another study could not confirm it. The sequence is that of Cytochrome P450 2D7 from Homo sapiens (Human).